The chain runs to 504 residues: Histidine ammonia-lyase (504 aa).

Residues 141-143 (ASG) constitute a cross-link (5-imidazolinone (Ala-Gly)). 2,3-didehydroalanine (Ser) is present on serine 142.

The protein belongs to the PAL/histidase family. In terms of processing, contains an active site 4-methylidene-imidazol-5-one (MIO), which is formed autocatalytically by cyclization and dehydration of residues Ala-Ser-Gly.

The protein localises to the cytoplasm. It catalyses the reaction L-histidine = trans-urocanate + NH4(+). The protein operates within amino-acid degradation; L-histidine degradation into L-glutamate; N-formimidoyl-L-glutamate from L-histidine: step 1/3. In Geobacillus kaustophilus (strain HTA426), this protein is Histidine ammonia-lyase.